The chain runs to 177 residues: Large ribosomal subunit protein uL6 (177 aa).

It belongs to the universal ribosomal protein uL6 family. In terms of assembly, part of the 50S ribosomal subunit.

In terms of biological role, this protein binds to the 23S rRNA, and is important in its secondary structure. It is located near the subunit interface in the base of the L7/L12 stalk, and near the tRNA binding site of the peptidyltransferase center. This is Large ribosomal subunit protein uL6 from Magnetococcus marinus (strain ATCC BAA-1437 / JCM 17883 / MC-1).